The sequence spans 265 residues: Lipopolysaccharide core heptose(I) kinase WaaP (265 aa).

Asp-162 is a catalytic residue.

This sequence belongs to the protein kinase superfamily. KdkA/RfaP family. The cofactor is Mg(2+).

It localises to the cell inner membrane. The catalysed reaction is an L-alpha-D-Hep-(1-&gt;3)-L-alpha-D-Hep-(1-&gt;5)-[alpha-Kdo-(2-&gt;4)]-alpha-Kdo-(2-&gt;6)-lipid A + ATP = an L-alpha-D-Hep-(1-&gt;3)-4-O-phospho-L-alpha-D-Hep-(1-&gt;5)-[alpha-Kdo-(2-&gt;4)]-alpha-Kdo-(2-&gt;6)-lipid A + ADP + H(+). It catalyses the reaction L-alpha-D-Hep-(1-&gt;3)-L-alpha-D-Hep-(1-&gt;5)-[alpha-Kdo-(2-&gt;4)]-alpha-Kdo-(2-&gt;6)-lipid A (E. coli) + ATP = L-alpha-D-Hep-(1-&gt;3)-4-O-phospho-L-alpha-D-Hep-(1-&gt;5)-[alpha-Kdo-(2-&gt;4)]-alpha-Kdo-(2-&gt;6)-lipid A (E. coli) + ADP + H(+). The protein operates within bacterial outer membrane biogenesis; LPS core biosynthesis. Kinase involved in the biosynthesis of the core oligosaccharide region of lipopolysaccharide (LPS). Catalyzes the phosphorylation of heptose I (HepI), the first heptose added to the Kdo2-lipid A module. This Escherichia coli protein is Lipopolysaccharide core heptose(I) kinase WaaP.